Consider the following 1395-residue polypeptide: MERRVLIVESEHDFALSMATVLKGAGYQTALAETAADAQRELEKRRPDLVVLRAELKDQSGFVLCGNIKKGKWGQNLKVLLLSSESGVDGLAQHRQTPQAADGYLAIPFEMGELAALSHGIVPPGTDDTGASLDAALNGTREAPPPMPPSLKAAAGGPPKLPKRERRSAMTEEDRAFLDRTFQSIADRKAELLAESRQLKRPPPRRELMGTPEGKIQILRDELKTREAQLARLSEIWNVRERELLSGEDRIHEKDVELQGLKMQVDDLLRRFNEAQQATIQKEREHGATVDDLLLQKFSAEKDLIEVVASKEKDINLLRREVSRAEEELSRRAGELEHGRNEYDKLEKHLGVVTLEFEVKEQKLQDTVLANEGEIARLTKRGDDFEAELNRTISERDQRFAELDGEIQALQERLQQTEQERDTTVRGLEARAARAEEHGTQADAEIHRLNAERDALEAKLSQQVADLEADLARTMGERDQLRLDKDAQEAELTQRIEERDAKLGTLERELSETIARNEHTEAELNANIQQQLERIGELEGEVEAVKTHLEDRENELTAELQALGQAKDELETDLNDRLQALSQAKDALEADLSRQLEELRSAKAELEADLTGQIQALTSQLEETQRQLDDSQRTGEQLSARVAQLEDTVSQRESTIESLQGDVAARDQRISELSGDLEATSQTLAQTQQTLAQTEQQLADTQNTLASTEGALAETRGELDATSQTLQQTQQTLAQTEGALAETRGELDATSQTLAQTQQTLAQTEQQLADTQNTLASTEGTLAETRGELEATSQTLQQTHAALEDTRGALQETSDTLAHTTRERDQRIAELADLGAAKDALEQELTGQIGHLRSELSETQGNYEAERAAHEKLAAESSAHIGDLTSERDGLRSELEATSQTLEQTHGQLAATRDALAREQHAHQESRKAAASTQTTLEGQLAEARAHGEDLGEHLTLTKHELGTRVAELTQLTATLAQTENTRAHLEERLHTLTEESQRREELLQNDLTQKGTELSDTLRKLTHVTQEKMRQAEVLNREVATRTEQLKAMEAKLQTQATEARRQAEGLGQQITGLNEQLEQGRKALAGREDQLRAAGAAQQKLTAERDGLAGQLQQAEARLQQQAQQANQERADAKRAADELAAKLAKTEQRITQFAQDAQTQATEADARAKDLQGQLSARAKKIQDLELAVENAQGAKSRAEKELNAKVAAAESKAHEASTRLAAAQKERKDLEARHAKEQEDLAAKQKAELERRDAIKAQEVARLQQSVQEKSKALKVAELELARYKSKSATTATPAKAAAKPAAAEDDELAVRTQLNQVIAPAAAAQAPAPAKKPAAKPAAQAPAKKAPAPAPAPPAALSDESEPTDRTLVIQLPTAKEDDDWTALVDELDK.

The 119-residue stretch at 4-122 (RVLIVESEHD…ELAALSHGIV (119 aa)) folds into the Response regulatory domain. Residue D48 is modified to 4-aspartylphosphate. Disordered regions lie at residues 137–172 (LNGTREAPPPMPPSLKAAAGGPPKLPKRERRSAMTE), 874–893 (AAESSAHIGDLTSERDGLRS), 919–947 (EQHAHQESRKAAASTQTTLEGQLAEARAH), 1212–1249 (AAESKAHEASTRLAAAQKERKDLEARHAKEQEDLAAKQ), 1287–1312 (RYKSKSATTATPAKAAAKPAAAEDDE), and 1326–1395 (AAAA…ELDK). The stretch at 213 to 911 (EGKIQILRDE…LEQTHGQLAA (699 aa)) forms a coiled coil. Basic and acidic residues-rich tracts occupy residues 919–928 (EQHAHQESRK) and 1228–1249 (QKERKDLEARHAKEQEDLAAKQ). Low complexity-rich tracts occupy residues 1291-1306 (KSATTATPAKAAAKPA) and 1326-1352 (AAAAQAPAPAKKPAAKPAAQAPAKKAP). Residues 1382–1395 (EDDDWTALVDELDK) show a composition bias toward acidic residues.

As to quaternary structure, interacts with MglA.

It localises to the cytoplasm. Required for adventurous-gliding motility (A motility), in response to environmental signals sensed by the frz chemosensory system. Forms ordered clusters that span the cell length and that remain stationary relative to the surface across which the cells move, serving as anchor points (focal, transient adhesion sites) that allow the bacterium to move forward. Clusters disassemble at the lagging cell pole. This Myxococcus xanthus (strain DK1622) protein is Adventurous-gliding motility protein Z (aglZ).